We begin with the raw amino-acid sequence, 249 residues long: MKFYKYCASGNDFVITNADRKEDRSALAKELCNRYEGIGGDGFIVILPHEKYDFEWEFYNNDGSRAAMCGNGSRAAAHFAHHINKINPNMSFLTGAGIIKAKVNQDKVEVSLGKIKSVQNTFEELGKTWQLCDTGVPHLVHFCQNLDEFDTILCQKMRQKYNANVNFVKILDENHLKVRTYERGVEDETLACGTGMGACFYLAFLNKKVQNKVKITPKSGEEVGFTYKNEELFFEGKVKYCFEANYNFS.

Substrate-binding residues include N11 and N60. C69 acts as the Proton donor in catalysis. Substrate contacts are provided by residues 70–71 (GN), N164, and 182–183 (ER). The Proton acceptor role is filled by C192. Residue 193–194 (GT) coordinates substrate.

Belongs to the diaminopimelate epimerase family. Homodimer.

The protein localises to the cytoplasm. It catalyses the reaction (2S,6S)-2,6-diaminopimelate = meso-2,6-diaminopimelate. The protein operates within amino-acid biosynthesis; L-lysine biosynthesis via DAP pathway; DL-2,6-diaminopimelate from LL-2,6-diaminopimelate: step 1/1. Catalyzes the stereoinversion of LL-2,6-diaminopimelate (L,L-DAP) to meso-diaminopimelate (meso-DAP), a precursor of L-lysine and an essential component of the bacterial peptidoglycan. This Campylobacter jejuni (strain RM1221) protein is Diaminopimelate epimerase.